We begin with the raw amino-acid sequence, 369 residues long: Septin-5 (369 aa).

Thr-13 is modified (phosphothreonine). The region spanning 41–314 (KGFDFTLMVA…ENYRAHCIQQ (274 aa)) is the Septin-type G domain. A G1 motif region spans residues 51 to 58 (GESGLGKS). Residues 51–58 (GESGLGKS), Thr-85, and Gly-111 each bind GTP. A G3 motif region spans residues 108–111 (DTPG). Arg-168 carries the post-translational modification Omega-N-methylarginine. The G4 motif stretch occupies residues 189–192 (AKAD). 190 to 198 (KADCLVPSE) serves as a coordination point for GTP. Ser-225 carries the post-translational modification Phosphoserine. 2 residues coordinate GTP: Gly-248 and Arg-263. Ser-327 carries the phosphoserine modification. Position 336 is a phosphothreonine (Thr-336). Residues 338 to 369 (DAETEKLIRMKDEELRRMQEMLQKMKQQMQDQ) adopt a coiled-coil conformation.

The protein belongs to the TRAFAC class TrmE-Era-EngA-EngB-Septin-like GTPase superfamily. Septin GTPase family. As to quaternary structure, septins polymerize into heterooligomeric protein complexes that form filaments, and can associate with cellular membranes, actin filaments and microtubules. GTPase activity is required for filament formation. Interacts with SEPTIN2 and SEPTIN5. Interaction with SEPTIN4 not detected. In platelets, associated with a complex containing STX4. Interacts with PRKN; this interaction leads to SEPTIN5 ubiquitination and degradation. Interacts with DYRK1A. Interacts with STX1A; in the cerebellar cortex. Phosphorylated by DYRK1A.

It is found in the cytoplasm. The protein resides in the cytoskeleton. Filament-forming cytoskeletal GTPase. Involved in cytokinesis (Potential). May play a role in platelet secretion. The sequence is that of Septin-5 from Mus musculus (Mouse).